The following is a 28-amino-acid chain: Alpha-(1-6)-linked fucose-specific lectin (28 aa).

As to quaternary structure, homohexamer. As to expression, expressed by mycelium-forming spores.

Its subcellular location is the secreted. In terms of biological role, alpha-(1-6)-linked L-fucose specific lectin. This Rhizopus stolonifer (Rhizopus nigricans) protein is Alpha-(1-6)-linked fucose-specific lectin.